The following is a 573-amino-acid chain: Sterol esterase 1 (573 aa).

The Cytoplasmic segment spans residues 1–12 (MGVSAVLKRARN). Residues 13–33 (LLATFIVCCFMAVVLVLALAH) lie within the membrane without spanning it. Over 34–573 (HFINEHRDTR…TELEMVAEKA (540 aa)) the chain is Cytoplasmic. Serine 315 functions as the Nucleophile in the catalytic mechanism. Residues aspartate 489 and histidine 520 each act as charge relay system in the active site.

It belongs to the AB hydrolase superfamily. Not N-glycosylated.

The protein localises to the lipid droplet. Its subcellular location is the membrane. It carries out the reaction a sterol ester + H2O = a sterol + a fatty acid + H(+). Functionally, mediates the hydrolysis of steryl esters, thereby playing a central role in lipid metabolism. Under heme-deficient conditions, it constitutes the major steryl ester hydrolase, suggesting that it plays a central role in mobilization of steryl esters under anaerobic conditions. This is Sterol esterase 1 (YEH1) from Saccharomyces cerevisiae (strain ATCC 204508 / S288c) (Baker's yeast).